A 302-amino-acid chain; its full sequence is MRNRTLADLDRVVALGGGHGLGRVLSSLSSLGSRLTGIVTTTDNGGSTGRIRRSEGGIAWGDMRNCLNQLITEPSVASAMFEYRFGGNGELSGHNLGNLMLKALDHLSVRPLEAINLIRNLLKVDAQLIPMSELPVDLMAIDDQGHEIYGEVNIDQLATPPQEIMLTPNVPATREAVQAINDADLILIGPGSFYTSLMPCLLLDELAQALRRTPAPMVYIGNLGRELSLPAASLTLVDKLAMMEQYIGKKVIDAVVVGPRVDVSAVNDRLVIQEVLEASDIPYRHDRQLLHNALEKALQALG.

This sequence belongs to the gluconeogenesis factor family.

Its subcellular location is the cytoplasm. Required for morphogenesis under gluconeogenic growth conditions. The chain is Putative gluconeogenesis factor (ybhK) from Salmonella typhimurium (strain LT2 / SGSC1412 / ATCC 700720).